A 441-amino-acid polypeptide reads, in one-letter code: MAEEKSYKYVIIGGGVAGGYAAREFSNQGLKPGELAIISKEPVPPFERPELTKVYIDLEVNPTLANIYVCAGTGEAKQYPNWYKEKGIDLIVGTEIVKADLASKTLVSDDGKIYKYQTLLIATGSTNIRLSEIGVQEADVKNIFYLREIEDSDELALAMELYVQRGKAVIIGGGFLGLEISSALRANNHEVTMVFPEPWLVHRFFTAEIASFYESYYANKGIKIIKGTVATGFSTNSDGEVTEVKLEDGRTLEANIVVAGVGARPATSLFKGQLEEEKGGIKTDGFFKTSVPDVYALGDVATFPMKMYGGTRRVEHADNARKSAAQAVKAIKAGEEGKTIPDYDYLPYFYSRFFKLSWEFYGENVGESVLFGDNDPKSPKPKFGTYWVKDGKVVGVFLEGGTQEEHKAIAKVARAQPSVESLDVLSEEGLSFATKFYSTSL.

FAD is bound by residues 14-17, glutamate 41, arginine 48, lysine 53, isoleucine 96, and 147-148; these read GGVA and RE. Residues 173-179, glutamate 197, arginine 203, and glycine 262 contribute to the NAD(+) site; that span reads GGFLGLE. 175 to 179 provides a ligand contact to NADP(+); that stretch reads FLGLE. 2 residues coordinate NADP(+): arginine 203 and glycine 262. Residue aspartate 299 coordinates FAD. Position 315 to 316 (315 to 316) interacts with NAD(+); sequence EH. NADP(+) is bound at residue 315–316; the sequence is EH. Arginine 321 is an L-ascorbate binding site. Tyrosine 350 contributes to the FAD binding site. Position 350 (tyrosine 350) interacts with NAD(+). Tyrosine 350 lines the NADP(+) pocket. Position 352 (arginine 352) interacts with L-ascorbate. Serine 418 carries the post-translational modification Phosphoserine.

This sequence belongs to the FAD-dependent oxidoreductase family. FAD serves as cofactor.

Its subcellular location is the cytoplasm. It catalyses the reaction 2 monodehydro-L-ascorbate radical + NADH + H(+) = 2 L-ascorbate + NAD(+). In terms of biological role, catalyzes the conversion of monodehydroascorbate to ascorbate, oxidizing NADH in the process. Required for producing sufficient ascorbate to maintain the interaction between Piriformospora indica and Arabidopsis in a mutualistic state. The polypeptide is Monodehydroascorbate reductase 3 (Arabidopsis thaliana (Mouse-ear cress)).